Consider the following 481-residue polypeptide: Ribosomal protein uS12 methylthiotransferase RimO (481 aa).

An MTTase N-terminal domain is found at 38 to 148; it reads NRIGFVSLGC…VLKHVHKYVP (111 aa). The [4Fe-4S] cluster site is built by Cys-47, Cys-83, Cys-112, Cys-180, Cys-184, and Cys-187. Positions 166 to 403 constitute a Radical SAM core domain; sequence LTPKHYAYLK…MEVQAEISAE (238 aa). The region spanning 406–472 is the TRAM domain; sequence ARFVGRTMDI…EHDLWAELVD (67 aa).

It belongs to the methylthiotransferase family. RimO subfamily. [4Fe-4S] cluster is required as a cofactor.

Its subcellular location is the cytoplasm. The catalysed reaction is L-aspartate(89)-[ribosomal protein uS12]-hydrogen + (sulfur carrier)-SH + AH2 + 2 S-adenosyl-L-methionine = 3-methylsulfanyl-L-aspartate(89)-[ribosomal protein uS12]-hydrogen + (sulfur carrier)-H + 5'-deoxyadenosine + L-methionine + A + S-adenosyl-L-homocysteine + 2 H(+). Functionally, catalyzes the methylthiolation of an aspartic acid residue of ribosomal protein uS12. The sequence is that of Ribosomal protein uS12 methylthiotransferase RimO from Shewanella oneidensis (strain ATCC 700550 / JCM 31522 / CIP 106686 / LMG 19005 / NCIMB 14063 / MR-1).